The chain runs to 369 residues: Anhydro-N-acetylmuramic acid kinase (369 aa).

Residue Gly12–Asp19 coordinates ATP.

This sequence belongs to the anhydro-N-acetylmuramic acid kinase family.

It catalyses the reaction 1,6-anhydro-N-acetyl-beta-muramate + ATP + H2O = N-acetyl-D-muramate 6-phosphate + ADP + H(+). It functions in the pathway amino-sugar metabolism; 1,6-anhydro-N-acetylmuramate degradation. The protein operates within cell wall biogenesis; peptidoglycan recycling. Catalyzes the specific phosphorylation of 1,6-anhydro-N-acetylmuramic acid (anhMurNAc) with the simultaneous cleavage of the 1,6-anhydro ring, generating MurNAc-6-P. Is required for the utilization of anhMurNAc either imported from the medium or derived from its own cell wall murein, and thus plays a role in cell wall recycling. This is Anhydro-N-acetylmuramic acid kinase from Shewanella baltica (strain OS185).